We begin with the raw amino-acid sequence, 106 residues long: UPF0145 protein NE1032 (106 aa).

It belongs to the UPF0145 family.

This is UPF0145 protein NE1032 from Nitrosomonas europaea (strain ATCC 19718 / CIP 103999 / KCTC 2705 / NBRC 14298).